A 110-amino-acid chain; its full sequence is Large ribosomal subunit protein P2B (110 aa).

A Phosphoserine modification is found at Ser29. Lys49 participates in a covalent cross-link: Glycyl lysine isopeptide (Lys-Gly) (interchain with G-Cter in ubiquitin). The tract at residues 66–110 (VPTGGASSAAAGAAGAAAGGDAAEEEKEEEAKEESDDDMGFGLFD) is disordered. Residues 69–86 (GGASSAAAGAAGAAAGGD) are compositionally biased toward low complexity. Positions 87 to 104 (AAEEEKEEEAKEESDDDM) are enriched in acidic residues. Ser100 is subject to Phosphoserine.

It belongs to the eukaryotic ribosomal protein P1/P2 family. Component of the large ribosomal subunit (LSU). Mature yeast ribosomes consist of a small (40S) and a large (60S) subunit. The 40S small subunit contains 1 molecule of ribosomal RNA (18S rRNA) and 33 different proteins (encoded by 57 genes). The large 60S subunit contains 3 rRNA molecules (25S, 5.8S and 5S rRNA) and 46 different proteins (encoded by 81 genes). The 5 acidic ribosomal P-proteins form the stalk structure of the 60S subunit. They are organized as a pentameric complex in which uL10/P0 interacts with 2 heterodimers, P1A-P2B and P1B-P2A. Post-translationally, the N-terminus is not modified.

It is found in the cytoplasm. In terms of biological role, component of the ribosome, a large ribonucleoprotein complex responsible for the synthesis of proteins in the cell. The small ribosomal subunit (SSU) binds messenger RNAs (mRNAs) and translates the encoded message by selecting cognate aminoacyl-transfer RNA (tRNA) molecules. The large subunit (LSU) contains the ribosomal catalytic site termed the peptidyl transferase center (PTC), which catalyzes the formation of peptide bonds, thereby polymerizing the amino acids delivered by tRNAs into a polypeptide chain. The nascent polypeptides leave the ribosome through a tunnel in the LSU and interact with protein factors that function in enzymatic processing, targeting, and the membrane insertion of nascent chains at the exit of the ribosomal tunnel. The chain is Large ribosomal subunit protein P2B from Saccharomyces cerevisiae (strain ATCC 204508 / S288c) (Baker's yeast).